The chain runs to 91 residues: UPF0728 protein v1g117062 (91 aa).

This sequence belongs to the UPF0728 family.

This is UPF0728 protein v1g117062 from Nematostella vectensis (Starlet sea anemone).